The sequence spans 238 residues: Probable transglycosylase SceD 3 (238 aa).

Residues 1–27 form the signal peptide; that stretch reads MKKTVVASTLAVGLGVTGFAAGNSADA. The interval 82–161 is disordered; sequence YGQGSTNAPA…SEASEGSSVN (80 aa). Residues 89–156 are compositionally biased toward low complexity; that stretch reads APAQETAEQP…NESSSSEASE (68 aa).

It belongs to the transglycosylase family. SceD subfamily.

The protein resides in the secreted. Is able to cleave peptidoglycan and affects clumping and separation of bacterial cells. This is Probable transglycosylase SceD 3 (sceD3) from Staphylococcus saprophyticus subsp. saprophyticus (strain ATCC 15305 / DSM 20229 / NCIMB 8711 / NCTC 7292 / S-41).